A 308-amino-acid polypeptide reads, in one-letter code: Coenzyme PQQ synthesis protein B (308 aa).

Belongs to the PqqB family.

It functions in the pathway cofactor biosynthesis; pyrroloquinoline quinone biosynthesis. In terms of biological role, may be involved in the transport of PQQ or its precursor to the periplasm. The polypeptide is Coenzyme PQQ synthesis protein B (Rhodopseudomonas palustris (strain TIE-1)).